The chain runs to 120 residues: NAD(P)H-quinone oxidoreductase subunit 3, chloroplastic (120 aa).

3 helical membrane passes run 14-34, 64-84, and 88-108; these read LIIS…LAPI, MFAL…PWAM, and VLGV…IVGS.

This sequence belongs to the complex I subunit 3 family. In terms of assembly, NDH is composed of at least 16 different subunits, 5 of which are encoded in the nucleus.

It localises to the plastid. Its subcellular location is the chloroplast thylakoid membrane. The enzyme catalyses a plastoquinone + NADH + (n+1) H(+)(in) = a plastoquinol + NAD(+) + n H(+)(out). It carries out the reaction a plastoquinone + NADPH + (n+1) H(+)(in) = a plastoquinol + NADP(+) + n H(+)(out). In terms of biological role, NDH shuttles electrons from NAD(P)H:plastoquinone, via FMN and iron-sulfur (Fe-S) centers, to quinones in the photosynthetic chain and possibly in a chloroplast respiratory chain. The immediate electron acceptor for the enzyme in this species is believed to be plastoquinone. Couples the redox reaction to proton translocation, and thus conserves the redox energy in a proton gradient. This Cicer arietinum (Chickpea) protein is NAD(P)H-quinone oxidoreductase subunit 3, chloroplastic.